The sequence spans 425 residues: Trigger factor (425 aa).

Positions 163-248 (GDTAVIDFEG…VHEIKTKELP (86 aa)) constitute a PPIase FKBP-type domain.

This sequence belongs to the FKBP-type PPIase family. Tig subfamily.

It localises to the cytoplasm. It carries out the reaction [protein]-peptidylproline (omega=180) = [protein]-peptidylproline (omega=0). Involved in protein export. Acts as a chaperone by maintaining the newly synthesized protein in an open conformation. Functions as a peptidyl-prolyl cis-trans isomerase. In Bacillus cereus (strain ATCC 10987 / NRS 248), this protein is Trigger factor.